The primary structure comprises 537 residues: Pentatricopeptide repeat-containing protein At1g02370, mitochondrial (537 aa).

Residues M1 to C18 constitute a mitochondrion transit peptide. PPR repeat units follow at residues H171–N205, N206–P240, C241–K275, T277–K307, N312–V346, N347–K377, and D382–P416.

Belongs to the PPR family. P subfamily.

The protein localises to the mitochondrion. In Arabidopsis thaliana (Mouse-ear cress), this protein is Pentatricopeptide repeat-containing protein At1g02370, mitochondrial.